The following is a 721-amino-acid chain: Glycine--tRNA ligase beta subunit (721 aa).

It belongs to the class-II aminoacyl-tRNA synthetase family. In terms of assembly, tetramer of two alpha and two beta subunits.

It is found in the cytoplasm. The catalysed reaction is tRNA(Gly) + glycine + ATP = glycyl-tRNA(Gly) + AMP + diphosphate. The protein is Glycine--tRNA ligase beta subunit of Sinorhizobium fredii (strain NBRC 101917 / NGR234).